A 212-amino-acid polypeptide reads, in one-letter code: F-box protein GID2 (212 aa).

The interval 1–74 (MKFRSDSSGG…AGEGEQPRVP (74 aa)) is disordered. The segment covering 35–59 (DPSSSSSQGEASSSSQPPPQQQQEE) has biased composition (low complexity). The F-box domain maps to 70-116 (QPRVPDLGEDLVFEVLRRAEARTLAAAACVSRGWRQLAEDERLWEAA).

As to quaternary structure, part of some SCF(GID2) complex, which consist of a SKP1 protein, CUL1, GID2 and some RING box protein. Interacts directly with SKP2 and SKP15. Interacts directly with DELLA protein SLR1. May have a higher affinity for phosphorylated SLR1 proteins. As to expression, widely expressed. Preferentially expressed in unopened flowers, shoot apices and elongation stem. Expressed at lower level in the leaf blades, leaf sheaths, roots and rachis.

The protein resides in the nucleus. It functions in the pathway protein modification; protein ubiquitination. Essential component of some SCF-type E3 ligase complex that positively regulates the gibberellin signaling pathway. Upon gibberellin treatment, the complex mediates the ubiquitination and subsequent degradation of DELLA protein SLR1, a repressor of the gibberellin pathway, leading to activate the pathway. This is F-box protein GID2 (GID2) from Oryza sativa subsp. japonica (Rice).